The primary structure comprises 1357 residues: MRAAILFCLVASSMAVPSGSLGSRPGTCPPQPSDQVMIEATRCSYVYGLTWDWNCNSQGQENYKCCQYENDIRICVPPIPADVDEEVGVEQPSQSVDQVRQAIQKTQDFIRKVGLYPAPDQRRRTTPTPDTVRWCVSSRCQMTKCQRMVSEFTYSPNMVPRKQWKCTQATSQEQCMFWIEQGWADIMTTREGQVYSANTTFNLKPIAYETTINDQQPEIQILKHYQNVTFALKSSRLVNPNTFSELRDKTTCHAGIDMPDFDMPASFADPVCNLIKEGVIPVTGNYIESFSDFVQESCVPGVLNMTYNKNGTYPLSLVTLCEDQQYKYSGIKGALSCLESGKGQVTFVDQKVIKKIMSDPNVRDNFQVVCRDESRPLDEEIFTDVTCHVGHTARPTIFINKNNTQQKETDIKTLVVKMMELYGNTDRDVNFNIFDSSVYDCGKCQMTGKPLNKNLIFLEESNTMKIVDDSKVYAGEVYAAYNVCSKLVPKPRAKICVTNVTEYEACRRFKGIAENIPEVKKVAWGCVLANSSIECMQAVHNNTADLFKANPMETFIAGKEFLLDPLMSVHRNDSVTMNHTYTRTLAVIKRSSLAKFPGLLSVPEGQPKYIKDLWKLKICSAGLKNFSAFHSPIGYLLANGTIPRIGSVFESVNRYFQATCVPEIEPETWRLDSDLLLGREMNWGFSSLNMYNFTGQEWLLWNTPATWNFLTYNRKVSTGLDIKKLIELKKQNLTSHIFNQNLSSPRNVELLDDLVGVEGISDLVKGVQDTIGPEGKQKMNMLRDRLSNSFPNFEAVRTLSDKVDIVNKMKDARQQRLQNKDHPFGNVIQETFQGHLMVDVFSKLLELRSDKISTLEEIISHVKTIPYLTDFKDVEITTVLKHPAIMSYVEIYFPRLSQTFVEPFDNVELREREFNRYTNPLWLSPKVHTYLDLVKNHQTEITKTCNSNLPLNFKGYEGALRCLKSGVADLASSTSRPSVTRTLRDTDLSTGWVHLQRPPPSLPQRQVVEIDVNMDIAKVCNFGEVMNPVLVTAYNTSGSWRWNITKALMIAHQSVALPALFGEGTVMGKDYDMLLPIAPLNQSYQPFLGSKPLRSMEAIVKASSYDWFKDQTGICYGETYTNIVKQRNETCQAIVKDVTCVGTPRMKKISVGRFGAKQFKMIKMCSRPSKFVRKMADFQCDNGFGYLKPVITAVACECMLCEEMIEYNTSFTEDNMWSDVSNKYVLTGEQDIYRQIPIWGNNSYFYDHTLNKNFELGNHSIIVEHVQTVVVERPSPGILSQVNSEVDPEVQVQMDSASLTKTCETVWNGQSWLPERFQGYKTSGSCVVPETGANAKSRVDRFRQIMQRKQQLVDHHH.

A signal peptide spans 1–15 (MRAAILFCLVASSMA). 2 consecutive Transferrin-like domains span residues 132–478 (VRWC…GEVY) and 493–1101 (AKIC…AIVK). N-linked (GlcNAc...) asparagine glycosylation is found at Asn198, Asn227, Asn304, Asn310, Asn402, Asn499, Asn530, Asn541, Asn572, Asn578, Asn625, Asn639, Asn692, Asn732, Asn741, Asn1035, Asn1043, Asn1081, Asn1128, Asn1208, Asn1241, and Asn1258.

This sequence belongs to the transferrin family. Synthesized in the intestines of the females and males and also in ovaries and testis.

The protein resides in the secreted. Functionally, may serve the following two functions: a classical role as a yolk protein precursor and probably shuttle iron to developing germ cells. The chain is Major yolk protein from Strongylocentrotus purpuratus (Purple sea urchin).